The sequence spans 570 residues: Sulfite reductase [NADPH] hemoprotein beta-component (570 aa).

Cys-434, Cys-440, Cys-479, and Cys-483 together coordinate [4Fe-4S] cluster. Cys-483 lines the siroheme pocket.

This sequence belongs to the nitrite and sulfite reductase 4Fe-4S domain family. As to quaternary structure, alpha(8)-beta(8). The alpha component is a flavoprotein, the beta component is a hemoprotein. Requires siroheme as cofactor. [4Fe-4S] cluster is required as a cofactor.

The catalysed reaction is hydrogen sulfide + 3 NADP(+) + 3 H2O = sulfite + 3 NADPH + 4 H(+). The protein operates within sulfur metabolism; hydrogen sulfide biosynthesis; hydrogen sulfide from sulfite (NADPH route): step 1/1. Its function is as follows. Component of the sulfite reductase complex that catalyzes the 6-electron reduction of sulfite to sulfide. This is one of several activities required for the biosynthesis of L-cysteine from sulfate. The sequence is that of Sulfite reductase [NADPH] hemoprotein beta-component from Escherichia coli O9:H4 (strain HS).